Reading from the N-terminus, the 183-residue chain is Cell division protein SepF (183 aa).

The disordered stretch occupies residues 13 to 58 (MHDDDDFDDDYEDYDDDFDEDYEDDKPSARKRLFTGSSKKDSVADE). Over residues 16–36 (DDDFDDDYEDYDDDFDEDYED) the composition is skewed to acidic residues.

This sequence belongs to the SepF family. As to quaternary structure, homodimer. Interacts with FtsZ.

The protein resides in the cytoplasm. Its function is as follows. Cell division protein that is part of the divisome complex and is recruited early to the Z-ring. Probably stimulates Z-ring formation, perhaps through the cross-linking of FtsZ protofilaments. Its function overlaps with FtsA. The protein is Cell division protein SepF of Lachnospira eligens (strain ATCC 27750 / DSM 3376 / VPI C15-48 / C15-B4) (Eubacterium eligens).